The chain runs to 373 residues: G protein-coupled receptor 137Ba (373 aa).

Residues 1–15 are Lumenal-facing; it reads MQKDSLPTLSPAVPP. Residues 16 to 36 form a helical membrane-spanning segment; the sequence is YVMLGLTVAYTIFYCLLFVFV. Residues 37–55 are Cytoplasmic-facing; that stretch reads YVQLWLVLRYRHKRFSYQT. The helical transmembrane segment at 56 to 76 threads the bilayer; it reads VFLFLCLLWAALRALLFSFYF. Residues 77–84 are Lumenal-facing; sequence KNCVTANT. The helical transmembrane segment at 85-105 threads the bilayer; the sequence is LGPFCFWLLYCFPVCLQFFTL. At 106 to 135 the chain is on the cytoplasmic side; it reads SLMNLYFAQVIFKAKSKYSPELQKYRLPLY. A helical membrane pass occupies residues 136 to 156; that stretch reads LLFLSISLLFLLVNLTCALLV. Topologically, residues 157–176 are lumenal; sequence KINRANTETVVLVRVTVNDS. Residues 177–197 traverse the membrane as a helical segment; it reads LFVLCAVSLSLCLYRIAKMSL. Residues 198–213 are Cytoplasmic-facing; that stretch reads ANIYLEAKGTSVCQVT. The helical transmembrane segment at 214–234 threads the bilayer; sequence LIGVTVVLLYSSRACYNLVVL. The Lumenal segment spans residues 235-268; sequence ALTKIKSINSFDYDWYNVSDQADLKSTLGDAGYV. A helical transmembrane segment spans residues 269–289; that stretch reads VFGVILFVWELLPTSLVVYFF. The Cytoplasmic segment spans residues 290 to 373; it reads RVRKPTLDRS…HLAPEELNPY (84 aa).

It belongs to the GPR137 family.

It is found in the lysosome membrane. In terms of biological role, lysosomal integral membrane protein that regulates the localization and activity of mTORC1, a signaling complex promoting cell growth in response to growth factors, energy levels, and amino acids. Interacts with Rag GTPases and increases the lysosomial localization and activity of Rag GTPases and thereby regulates mTORC1 translocation and activity in lysosome. Also acts as a negative regulator of osteoclast activity. May be involved in interleukin-4-induced M2 macrophage polarization. Its function is as follows. Also acts as a negative regulator of osteoclast activity. May be involved in interleukin-4-induced M2 macrophage polarization. The polypeptide is G protein-coupled receptor 137Ba (Danio rerio (Zebrafish)).